The chain runs to 408 residues: MDLLGILSPNAYFCSMAKLINLKIFTHFFRSSAAGGILLLICVLVSLIVANTGLGVHFNDFLGYPLGFEAAGLQLRYPILLWINDGLMAVFFLLVGLEIKREVIEGELSSLRHAALPVLAAVGGVIIPALIYFLFNGQSPDTAKGWGIPMATDIAFALGILSLLGDKVPSGLKIFLAALAIVDDLIAILVIAVFYSSELHFLYLGYAGGIFVLLMVFNRLGVKNLFFYLLPGAVMWYFIHHSGIHATIAGVLTALTLPTNQEDKDSPLEKLEHALARPVNFIIMPVFALANTNIAFESEMLQGLTGNLGLGIILGLVLGKPIGIFVMSWLSVKIRAADLPAQTTWTHVLGLGLLGGIGFTMSIFIALLSFQEQAYQNEAKFAILTASVLAGAAGFILLSSYNKNKQEQ.

11 helical membrane passes run 36–56 (GILL…GLGV), 79–99 (ILLW…GLEI), 115–135 (ALPV…YFLF), 145–165 (GWGI…SLLG), 174–194 (IFLA…IAVF), 197–217 (SELH…LMVF), 225–245 (LFFY…SGIH), 281–301 (FIIM…SEML), 310–330 (LGII…MSWL), 348–368 (VLGL…IALL), and 381–401 (FAIL…LSSY).

This sequence belongs to the NhaA Na(+)/H(+) (TC 2.A.33) antiporter family.

The protein localises to the cell inner membrane. The enzyme catalyses Na(+)(in) + 2 H(+)(out) = Na(+)(out) + 2 H(+)(in). Na(+)/H(+) antiporter that extrudes sodium in exchange for external protons. The chain is Na(+)/H(+) antiporter NhaA 2 from Flavobacterium johnsoniae (strain ATCC 17061 / DSM 2064 / JCM 8514 / BCRC 14874 / CCUG 350202 / NBRC 14942 / NCIMB 11054 / UW101) (Cytophaga johnsonae).